The primary structure comprises 57 residues: DNA-directed RNA polymerase subunit Rpo6 (57 aa).

The protein belongs to the archaeal Rpo6/eukaryotic RPB6 RNA polymerase subunit family. In terms of assembly, part of the RNA polymerase complex.

The protein localises to the cytoplasm. It localises to the chromosome. The enzyme catalyses RNA(n) + a ribonucleoside 5'-triphosphate = RNA(n+1) + diphosphate. Its function is as follows. DNA-dependent RNA polymerase (RNAP) catalyzes the transcription of DNA into RNA using the four ribonucleoside triphosphates as substrates. The chain is DNA-directed RNA polymerase subunit Rpo6 from Thermococcus kodakarensis (strain ATCC BAA-918 / JCM 12380 / KOD1) (Pyrococcus kodakaraensis (strain KOD1)).